The primary structure comprises 102 residues: NADH-quinone oxidoreductase subunit K 1 (102 aa).

3 consecutive transmembrane segments (helical) span residues 5–25 (FEHV…CVLV), 30–50 (LIML…AFVG), and 65–85 (LVIM…VVYL).

This sequence belongs to the complex I subunit 4L family. NDH-1 is composed of 14 different subunits. Subunits NuoA, H, J, K, L, M, N constitute the membrane sector of the complex.

It localises to the cell inner membrane. The enzyme catalyses a quinone + NADH + 5 H(+)(in) = a quinol + NAD(+) + 4 H(+)(out). Its function is as follows. NDH-1 shuttles electrons from NADH, via FMN and iron-sulfur (Fe-S) centers, to quinones in the respiratory chain. The immediate electron acceptor for the enzyme in this species is believed to be ubiquinone. Couples the redox reaction to proton translocation (for every two electrons transferred, four hydrogen ions are translocated across the cytoplasmic membrane), and thus conserves the redox energy in a proton gradient. In Geobacter metallireducens (strain ATCC 53774 / DSM 7210 / GS-15), this protein is NADH-quinone oxidoreductase subunit K 1.